We begin with the raw amino-acid sequence, 424 residues long: Histidine--tRNA ligase (424 aa).

Belongs to the class-II aminoacyl-tRNA synthetase family. As to quaternary structure, homodimer.

Its subcellular location is the cytoplasm. It catalyses the reaction tRNA(His) + L-histidine + ATP = L-histidyl-tRNA(His) + AMP + diphosphate + H(+). The protein is Histidine--tRNA ligase of Thioalkalivibrio sulfidiphilus (strain HL-EbGR7).